The following is a 243-amino-acid chain: Type III pantothenate kinase (243 aa).

Residue 7–14 coordinates ATP; the sequence is DIGNTRLK. Substrate is bound by residues Tyr95 and 102–105; that span reads GIDR. Residue Asp104 is the Proton acceptor of the active site. Thr126 is an ATP binding site. Thr177 serves as a coordination point for substrate.

The protein belongs to the type III pantothenate kinase family. As to quaternary structure, homodimer. It depends on NH4(+) as a cofactor. The cofactor is K(+).

Its subcellular location is the cytoplasm. The enzyme catalyses (R)-pantothenate + ATP = (R)-4'-phosphopantothenate + ADP + H(+). Its pathway is cofactor biosynthesis; coenzyme A biosynthesis; CoA from (R)-pantothenate: step 1/5. Catalyzes the phosphorylation of pantothenate (Pan), the first step in CoA biosynthesis. The protein is Type III pantothenate kinase of Acinetobacter baylyi (strain ATCC 33305 / BD413 / ADP1).